The primary structure comprises 489 residues: Long chain base biosynthesis protein 2b (489 aa).

Residues isoleucine 2 to phenylalanine 22 traverse the membrane as a helical segment. An N6-(pyridoxal phosphate)lysine modification is found at lysine 311.

This sequence belongs to the class-II pyridoxal-phosphate-dependent aminotransferase family. Heterodimer with LCB1. Component of the serine palmitoyltransferase (SPT) complex, composed of LCB1 and LCB2 (LCB2a or LCB2b). It depends on pyridoxal 5'-phosphate as a cofactor. Ubiquitous with the highest expression in flowers.

It is found in the endoplasmic reticulum membrane. It carries out the reaction L-serine + hexadecanoyl-CoA + H(+) = 3-oxosphinganine + CO2 + CoA. Its pathway is lipid metabolism; sphingolipid metabolism. In terms of biological role, serine palmitoyltransferase (SPT). The heterodimer formed with LCB1 constitutes the catalytic core. Plays an important role during male gametogenesis and embryogenesis. The chain is Long chain base biosynthesis protein 2b (LCB2b) from Arabidopsis thaliana (Mouse-ear cress).